The primary structure comprises 489 residues: 2-(3-amino-3-carboxypropyl)histidine synthase subunit 2 (489 aa).

M1 bears the N-acetylmethionine mark. Residue S7 is modified to Phosphoserine. [4Fe-4S] cluster contacts are provided by C89, C110, and C341. Position 435 is a phosphothreonine (T435). Residues S446 and S456 each carry the phosphoserine modification. Phosphothreonine is present on T467. Phosphoserine is present on S488.

The protein belongs to the DPH1/DPH2 family. DPH2 subfamily. Component of the 2-(3-amino-3-carboxypropyl)histidine synthase complex composed of DPH1, DPH2, DPH3 and a NADH-dependent reductase. Interacts with DPH1. [4Fe-4S] cluster is required as a cofactor.

Its pathway is protein modification; peptidyl-diphthamide biosynthesis. Functionally, required for the first step of diphthamide biosynthesis, a post-translational modification of histidine which occurs in elongation factor 2. DPH1 and DPH2 transfer a 3-amino-3-carboxypropyl (ACP) group from S-adenosyl-L-methionine (SAM) to a histidine residue, the reaction is assisted by a reduction system comprising DPH3 and a NADH-dependent reductase. Facilitates the reduction of the catalytic iron-sulfur cluster found in the DPH1 subunit. This is 2-(3-amino-3-carboxypropyl)histidine synthase subunit 2 (DPH2) from Pongo abelii (Sumatran orangutan).